A 339-amino-acid chain; its full sequence is Anthranilate phosphoribosyltransferase (339 aa).

5-phospho-alpha-D-ribose 1-diphosphate-binding positions include Gly81, 84–85 (GD), Ser89, 91–94 (NVSS), 109–117 (KHGNRALSS), and Ala121. Gly81 serves as a coordination point for anthranilate. Ser93 contributes to the Mg(2+) binding site. Residue Asn112 participates in anthranilate binding. Arg167 lines the anthranilate pocket. Mg(2+)-binding residues include Asp225 and Glu226.

It belongs to the anthranilate phosphoribosyltransferase family. As to quaternary structure, homodimer. Requires Mg(2+) as cofactor.

The catalysed reaction is N-(5-phospho-beta-D-ribosyl)anthranilate + diphosphate = 5-phospho-alpha-D-ribose 1-diphosphate + anthranilate. The protein operates within amino-acid biosynthesis; L-tryptophan biosynthesis; L-tryptophan from chorismate: step 2/5. Catalyzes the transfer of the phosphoribosyl group of 5-phosphorylribose-1-pyrophosphate (PRPP) to anthranilate to yield N-(5'-phosphoribosyl)-anthranilate (PRA). The protein is Anthranilate phosphoribosyltransferase of Brucella ovis (strain ATCC 25840 / 63/290 / NCTC 10512).